The chain runs to 361 residues: Phospho-N-acetylmuramoyl-pentapeptide-transferase (361 aa).

10 helical membrane-spanning segments follow: residues 26-46 (AGGA…CIIE), 71-91 (TPTM…FLWA), 97-117 (FILW…CDDY), 134-154 (IFGQ…FPSN), 168-188 (GFFI…IVGS), 200-220 (GLAI…AYFA), 236-256 (GAGE…GFLW), 264-284 (IFMG…VSLF), 290-310 (VLVL…IQIF), and 338-358 (KVTV…FASL).

Belongs to the glycosyltransferase 4 family. MraY subfamily. It depends on Mg(2+) as a cofactor.

It localises to the cell membrane. The catalysed reaction is UDP-N-acetyl-alpha-D-muramoyl-L-alanyl-gamma-D-glutamyl-meso-2,6-diaminopimeloyl-D-alanyl-D-alanine + di-trans,octa-cis-undecaprenyl phosphate = di-trans,octa-cis-undecaprenyl diphospho-N-acetyl-alpha-D-muramoyl-L-alanyl-D-glutamyl-meso-2,6-diaminopimeloyl-D-alanyl-D-alanine + UMP. It participates in cell wall biogenesis; peptidoglycan biosynthesis. Functionally, catalyzes the initial step of the lipid cycle reactions in the biosynthesis of the cell wall peptidoglycan: transfers peptidoglycan precursor phospho-MurNAc-pentapeptide from UDP-MurNAc-pentapeptide onto the lipid carrier undecaprenyl phosphate, yielding undecaprenyl-pyrophosphoryl-MurNAc-pentapeptide, known as lipid I. The polypeptide is Phospho-N-acetylmuramoyl-pentapeptide-transferase (Endomicrobium trichonymphae).